A 955-amino-acid polypeptide reads, in one-letter code: 2-oxoglutarate dehydrogenase E1 component (955 aa).

The protein belongs to the alpha-ketoglutarate dehydrogenase family. Homodimer. Part of the 2-oxoglutarate dehydrogenase (OGDH) complex composed of E1 (2-oxoglutarate dehydrogenase), E2 (dihydrolipoamide succinyltransferase) and E3 (dihydrolipoamide dehydrogenase); the complex contains multiple copies of the three enzymatic components (E1, E2 and E3). Requires thiamine diphosphate as cofactor.

It catalyses the reaction N(6)-[(R)-lipoyl]-L-lysyl-[protein] + 2-oxoglutarate + H(+) = N(6)-[(R)-S(8)-succinyldihydrolipoyl]-L-lysyl-[protein] + CO2. Its function is as follows. E1 component of the 2-oxoglutarate dehydrogenase (OGDH) complex which catalyzes the decarboxylation of 2-oxoglutarate, the first step in the conversion of 2-oxoglutarate to succinyl-CoA and CO(2). In Bacillus cereus (strain AH820), this protein is 2-oxoglutarate dehydrogenase E1 component.